The primary structure comprises 227 residues: 2,3-bisphosphoglycerate-dependent phosphoglycerate mutase (227 aa).

Substrate is bound by residues 8 to 15 (RHGQSIWN), 21 to 22 (TG), arginine 58, 110 to 113 (ERYY), lysine 121, 137 to 138 (RR), and 181 to 182 (GN). Residue histidine 9 is the Tele-phosphohistidine intermediate of the active site. The active-site Proton donor/acceptor is glutamate 110.

The protein belongs to the phosphoglycerate mutase family. BPG-dependent PGAM subfamily. Homodimer.

It carries out the reaction (2R)-2-phosphoglycerate = (2R)-3-phosphoglycerate. Its pathway is carbohydrate degradation; glycolysis; pyruvate from D-glyceraldehyde 3-phosphate: step 3/5. Functionally, catalyzes the interconversion of 2-phosphoglycerate and 3-phosphoglycerate. This Pseudoalteromonas atlantica (strain T6c / ATCC BAA-1087) protein is 2,3-bisphosphoglycerate-dependent phosphoglycerate mutase.